The following is an 843-amino-acid chain: Urease (843 aa).

In terms of domain architecture, Urease spans 400–843; the sequence is GGIDCHVHFI…VPLSRNYFLF (444 aa). Ni(2+)-binding residues include histidine 405, histidine 407, and lysine 488. Lysine 488 bears the N6-carboxylysine mark. Histidine 490 provides a ligand contact to substrate. Ni(2+) contacts are provided by histidine 517 and histidine 543. Histidine 591 functions as the Proton donor in the catalytic mechanism. Ni(2+) is bound at residue aspartate 631.

The protein in the C-terminal section; belongs to the metallo-dependent hydrolases superfamily. Urease alpha subunit family. In terms of assembly, homohexamer. Other oligomeric forms may exist depending on pH and presence of salts. Requires Ni(2+) as cofactor. In terms of processing, carboxylation allows a single lysine to coordinate two nickel ions.

It catalyses the reaction urea + 2 H2O + H(+) = hydrogencarbonate + 2 NH4(+). The protein operates within nitrogen metabolism; urea degradation; CO(2) and NH(3) from urea (urease route): step 1/1. In terms of biological role, urea hydrolase involved in nitrogen recycling from ureide, purine, and arginine catabolism. The sequence is that of Urease from Oryza sativa subsp. indica (Rice).